Reading from the N-terminus, the 253-residue chain is Large ribosomal subunit protein uL4 (253 aa).

Belongs to the universal ribosomal protein uL4 family. In terms of assembly, part of the 50S ribosomal subunit.

One of the primary rRNA binding proteins, this protein initially binds near the 5'-end of the 23S rRNA. It is important during the early stages of 50S assembly. It makes multiple contacts with different domains of the 23S rRNA in the assembled 50S subunit and ribosome. In terms of biological role, forms part of the polypeptide exit tunnel. The polypeptide is Large ribosomal subunit protein uL4 (Methanococcoides burtonii (strain DSM 6242 / NBRC 107633 / OCM 468 / ACE-M)).